We begin with the raw amino-acid sequence, 756 residues long: Tubulin glycylase 3B (756 aa).

Positions 104-123 (TPLPRTVTSSPTAPEAQKRQ) are disordered. A TTL domain is found at 272 to 629 (LEERMAFIED…DLPKNPTAAT (358 aa)). ATP-binding positions include 440 to 443 (QKYI), Lys453, and Asp455. The disordered stretch occupies residues 709 to 736 (ITKKKKLSASAGSSTAASAQPSTQNLTT). Low complexity predominate over residues 716-727 (SASAGSSTAASA).

The protein resides in the cytoplasm. Its subcellular location is the cytoskeleton. It is found in the nucleus. Its function is as follows. Essential glycylase which modifies both tubulin and non-tubulin proteins, generating side chains of glycine on the gamma-carboxyl groups of specific glutamate residues of target proteins. Monoglycylates alpha-tubulin by adding a single glycine chain to generate monoglycine side chains, but is not involved in elongation step to generate polyglycine side chains on alpha-tubulin. Has the ability to both mono- and polyglycylate non-tubulin proteins such as up (Troponin T). Required for early steps of spermatogenesis. This Drosophila melanogaster (Fruit fly) protein is Tubulin glycylase 3B (TTLL3B).